A 157-amino-acid chain; its full sequence is Endoribonuclease YbeY (157 aa).

3 residues coordinate Zn(2+): H121, H125, and D131.

Belongs to the endoribonuclease YbeY family. It depends on Zn(2+) as a cofactor.

The protein resides in the cytoplasm. Its function is as follows. Single strand-specific metallo-endoribonuclease involved in late-stage 70S ribosome quality control and in maturation of the 3' terminus of the 16S rRNA. This is Endoribonuclease YbeY from Salinibacter ruber (strain DSM 13855 / M31).